The sequence spans 116 residues: Large ribosomal subunit protein uL18 (116 aa).

The protein belongs to the universal ribosomal protein uL18 family. In terms of assembly, part of the 50S ribosomal subunit; part of the 5S rRNA/L5/L18/L25 subcomplex. Contacts the 5S and 23S rRNAs.

This is one of the proteins that bind and probably mediate the attachment of the 5S RNA into the large ribosomal subunit, where it forms part of the central protuberance. This is Large ribosomal subunit protein uL18 from Mycoplasma capricolum subsp. capricolum (strain California kid / ATCC 27343 / NCTC 10154).